Here is a 153-residue protein sequence, read N- to C-terminus: Probable ubiquitin-conjugating enzyme E2 C (153 aa).

The UBC core domain occupies 6 to 153 (SVSKRLQSEL…KRYQEATSRP (148 aa)). Cysteine 90 acts as the Glycyl thioester intermediate in catalysis.

It belongs to the ubiquitin-conjugating enzyme family. In terms of assembly, component of the APC/C complex. Post-translationally, autoubiquitinated by the APC/C complex, leading to its degradation by the proteasome.

The enzyme catalyses S-ubiquitinyl-[E1 ubiquitin-activating enzyme]-L-cysteine + [E2 ubiquitin-conjugating enzyme]-L-cysteine = [E1 ubiquitin-activating enzyme]-L-cysteine + S-ubiquitinyl-[E2 ubiquitin-conjugating enzyme]-L-cysteine.. Its pathway is protein modification; protein ubiquitination. In terms of biological role, catalyzes the covalent attachment of ubiquitin to other proteins. Acts as an essential factor of the anaphase promoting complex/cyclosome (APC/C), a cell cycle-regulated ubiquitin ligase that controls progression through mitosis. Acts by initiating polyubiquitin chains on APC/C substrates, leading to the degradation of APC/C substrates by the proteasome and promoting mitotic exit. This is Probable ubiquitin-conjugating enzyme E2 C (ube2c) from Dictyostelium discoideum (Social amoeba).